The chain runs to 228 residues: Adenosylcobinamide-GDP ribazoletransferase (228 aa).

6 helical membrane-spanning segments follow: residues 24–44 (VWML…ILYL), 50–70 (NVLS…DGLA), 96–116 (IAGT…LFSA), 117–137 (PFYS…LALA), 159–176 (VFLG…ILLY), and 181–198 (IFAL…KISL).

This sequence belongs to the CobS family. Requires Mg(2+) as cofactor.

It localises to the cell membrane. It catalyses the reaction alpha-ribazole + adenosylcob(III)inamide-GDP = adenosylcob(III)alamin + GMP + H(+). The enzyme catalyses alpha-ribazole 5'-phosphate + adenosylcob(III)inamide-GDP = adenosylcob(III)alamin 5'-phosphate + GMP + H(+). It participates in cofactor biosynthesis; adenosylcobalamin biosynthesis; adenosylcobalamin from cob(II)yrinate a,c-diamide: step 7/7. Joins adenosylcobinamide-GDP and alpha-ribazole to generate adenosylcobalamin (Ado-cobalamin). Also synthesizes adenosylcobalamin 5'-phosphate from adenosylcobinamide-GDP and alpha-ribazole 5'-phosphate. The sequence is that of Adenosylcobinamide-GDP ribazoletransferase from Pyrococcus furiosus (strain ATCC 43587 / DSM 3638 / JCM 8422 / Vc1).